A 245-amino-acid chain; its full sequence is Phosphoadenosine 5'-phosphosulfate reductase (245 aa).

The active-site Nucleophile; cysteine thiosulfonate intermediate is the cysteine 239.

This sequence belongs to the PAPS reductase family. CysH subfamily.

Its subcellular location is the cytoplasm. It catalyses the reaction [thioredoxin]-disulfide + sulfite + adenosine 3',5'-bisphosphate + 2 H(+) = [thioredoxin]-dithiol + 3'-phosphoadenylyl sulfate. It functions in the pathway sulfur metabolism; hydrogen sulfide biosynthesis; sulfite from sulfate: step 3/3. In terms of biological role, catalyzes the formation of sulfite from phosphoadenosine 5'-phosphosulfate (PAPS) using thioredoxin as an electron donor. This Alkalilimnicola ehrlichii (strain ATCC BAA-1101 / DSM 17681 / MLHE-1) protein is Phosphoadenosine 5'-phosphosulfate reductase.